A 292-amino-acid chain; its full sequence is Ribosomal protein L11 methyltransferase (292 aa).

4 residues coordinate S-adenosyl-L-methionine: Thr144, Gly165, Asp187, and Asn229.

This sequence belongs to the methyltransferase superfamily. PrmA family.

Its subcellular location is the cytoplasm. It carries out the reaction L-lysyl-[protein] + 3 S-adenosyl-L-methionine = N(6),N(6),N(6)-trimethyl-L-lysyl-[protein] + 3 S-adenosyl-L-homocysteine + 3 H(+). Methylates ribosomal protein L11. In Azotobacter vinelandii (strain DJ / ATCC BAA-1303), this protein is Ribosomal protein L11 methyltransferase.